The chain runs to 184 residues: Peptide deformylase (184 aa).

Fe cation is bound by residues cysteine 98 and histidine 140. The active site involves glutamate 141. Residue histidine 144 participates in Fe cation binding.

The protein belongs to the polypeptide deformylase family. Fe(2+) serves as cofactor.

The enzyme catalyses N-terminal N-formyl-L-methionyl-[peptide] + H2O = N-terminal L-methionyl-[peptide] + formate. Functionally, removes the formyl group from the N-terminal Met of newly synthesized proteins. Requires at least a dipeptide for an efficient rate of reaction. N-terminal L-methionine is a prerequisite for activity but the enzyme has broad specificity at other positions. This chain is Peptide deformylase, found in Bacteroides fragilis (strain ATCC 25285 / DSM 2151 / CCUG 4856 / JCM 11019 / LMG 10263 / NCTC 9343 / Onslow / VPI 2553 / EN-2).